A 184-amino-acid polypeptide reads, in one-letter code: Class II hydrophobin 6 (184 aa).

The signal sequence occupies residues methionine 1–alanine 16. 4 disulfides stabilise this stretch: cysteine 122-cysteine 169, cysteine 130-cysteine 160, cysteine 131-cysteine 143, and cysteine 170-cysteine 181.

The protein belongs to the cerato-ulmin hydrophobin family. As to quaternary structure, homotetramer. Further self-assembles to form highly ordered films at water-air interfaces through intermolecular interactions. In terms of tissue distribution, expressed in the mycellium.

It is found in the secreted. In terms of biological role, aerial growth, conidiation, and dispersal of filamentous fungi in the environment rely upon a capability of their secreting small amphipathic proteins called hydrophobins (HPBs) with low sequence identity. Class I can self-assemble into an outermost layer of rodlet bundles on aerial cell surfaces, conferring cellular hydrophobicity that supports fungal growth, development and dispersal; whereas Class II form highly ordered films at water-air interfaces through intermolecular interactions but contribute nothing to the rodlet structure. Hcf-6 is a class II hydrophobin that is involved in adhesion and in tomato plants infection. Is secreted to form a coat both around and beneath the fungus. In Passalora fulva (Tomato leaf mold), this protein is Class II hydrophobin 6.